A 453-amino-acid chain; its full sequence is Bifunctional protein GlmU (453 aa).

Residues methionine 1–arginine 226 form a pyrophosphorylase region. UDP-N-acetyl-alpha-D-glucosamine is bound by residues leucine 8–glycine 11, lysine 22, glutamine 73, glycine 78–threonine 79, tyrosine 100–aspartate 102, glycine 137, glutamate 151, asparagine 166, and asparagine 224. A Mg(2+)-binding site is contributed by aspartate 102. Residue asparagine 224 participates in Mg(2+) binding. The tract at residues alanine 227–glutamine 247 is linker. Positions glycine 248–lysine 453 are N-acetyltransferase. Positions 330 and 348 each coordinate UDP-N-acetyl-alpha-D-glucosamine. Histidine 360 functions as the Proton acceptor in the catalytic mechanism. UDP-N-acetyl-alpha-D-glucosamine contacts are provided by tyrosine 363 and asparagine 374. Acetyl-CoA-binding positions include alanine 377, asparagine 383–tyrosine 384, serine 402, alanine 420, and arginine 437.

The protein in the N-terminal section; belongs to the N-acetylglucosamine-1-phosphate uridyltransferase family. In the C-terminal section; belongs to the transferase hexapeptide repeat family. Homotrimer. It depends on Mg(2+) as a cofactor.

Its subcellular location is the cytoplasm. It carries out the reaction alpha-D-glucosamine 1-phosphate + acetyl-CoA = N-acetyl-alpha-D-glucosamine 1-phosphate + CoA + H(+). It catalyses the reaction N-acetyl-alpha-D-glucosamine 1-phosphate + UTP + H(+) = UDP-N-acetyl-alpha-D-glucosamine + diphosphate. Its pathway is nucleotide-sugar biosynthesis; UDP-N-acetyl-alpha-D-glucosamine biosynthesis; N-acetyl-alpha-D-glucosamine 1-phosphate from alpha-D-glucosamine 6-phosphate (route II): step 2/2. It functions in the pathway nucleotide-sugar biosynthesis; UDP-N-acetyl-alpha-D-glucosamine biosynthesis; UDP-N-acetyl-alpha-D-glucosamine from N-acetyl-alpha-D-glucosamine 1-phosphate: step 1/1. It participates in bacterial outer membrane biogenesis; LPS lipid A biosynthesis. In terms of biological role, catalyzes the last two sequential reactions in the de novo biosynthetic pathway for UDP-N-acetylglucosamine (UDP-GlcNAc). The C-terminal domain catalyzes the transfer of acetyl group from acetyl coenzyme A to glucosamine-1-phosphate (GlcN-1-P) to produce N-acetylglucosamine-1-phosphate (GlcNAc-1-P), which is converted into UDP-GlcNAc by the transfer of uridine 5-monophosphate (from uridine 5-triphosphate), a reaction catalyzed by the N-terminal domain. This is Bifunctional protein GlmU from Vibrio campbellii (strain ATCC BAA-1116).